The chain runs to 224 residues: tRNA (guanine-N(7)-)-methyltransferase (224 aa).

Positions 54, 79, 106, and 129 each coordinate S-adenosyl-L-methionine. Aspartate 129 is an active-site residue. Residues lysine 133 and aspartate 165 each contribute to the substrate site.

It belongs to the class I-like SAM-binding methyltransferase superfamily. TrmB family.

It carries out the reaction guanosine(46) in tRNA + S-adenosyl-L-methionine = N(7)-methylguanosine(46) in tRNA + S-adenosyl-L-homocysteine. The protein operates within tRNA modification; N(7)-methylguanine-tRNA biosynthesis. In terms of biological role, catalyzes the formation of N(7)-methylguanine at position 46 (m7G46) in tRNA. In Chlamydia felis (strain Fe/C-56) (Chlamydophila felis), this protein is tRNA (guanine-N(7)-)-methyltransferase.